Here is a 434-residue protein sequence, read N- to C-terminus: CCA tRNA nucleotidyltransferase 1, mitochondrial (434 aa).

A mitochondrion-targeting transit peptide spans 1-41 (MQSVLYPWHRQVLRCSWSRLCLLKRYLFTMKLQSPEFQSLF). Positions 64 and 67 each coordinate ATP. 2 residues coordinate CTP: Gly64 and Arg67. 2 residues coordinate Mg(2+): Asp77 and Asp79. 5 residues coordinate ATP: Arg151, Asp194, Arg197, Arg200, and Arg203. Residues Arg151, Asp194, Arg197, Arg200, and Arg203 each contribute to the CTP site. Ser400 is subject to Phosphoserine. Lys402 carries the post-translational modification N6-acetyllysine.

It belongs to the tRNA nucleotidyltransferase/poly(A) polymerase family. In terms of assembly, monomer, and homodimer. The cofactor is Mg(2+).

The protein resides in the mitochondrion. It localises to the cytoplasm. Its subcellular location is the nucleus. It carries out the reaction a tRNA precursor + 2 CTP + ATP = a tRNA with a 3' CCA end + 3 diphosphate. The catalysed reaction is a tRNA with a 3' CCA end + 2 CTP + ATP = a tRNA with a 3' CCACCA end + 3 diphosphate. In terms of biological role, nucleotidyltransferase that catalyzes the addition and repair of the essential 3'-terminal CCA sequence in tRNAs, which is necessary for the attachment of amino acids to the 3' terminus of tRNA molecules, using CTP and ATP as substrates. tRNA 3'-terminal CCA addition is required both for tRNA processing and repair. Promotes tRNA repair and recycling downstream of the ribosome-associated quality control (RQC) pathway by mediating addition of the tRNA 3'-terminal CCA following cleavage by ANKZF1 and repair by ELAC1. Also involved in tRNA surveillance by mediating tandem CCA addition to generate a CCACCA at the 3' terminus of unstable tRNAs and tRNA-like transcripts. While stable tRNAs receive only 3'-terminal CCA, unstable tRNAs beginning with GG are marked with CCACCA and rapidly degraded. The structural flexibility of RNA controls the choice between CCA versus CCACCA addition: following the first CCA addition cycle, nucleotide-binding to the active site triggers a clockwise screw motion, producing torque on the RNA. This ejects stable RNAs, whereas unstable RNAs are refolded while bound to the enzyme and subjected to a second CCA catalytic cycle. The protein is CCA tRNA nucleotidyltransferase 1, mitochondrial (Trnt1) of Mus musculus (Mouse).